The following is a 100-amino-acid chain: MSILNHFIFTFFLFCLGLFGIILNRQNIIIILMSIELLLLSINLNFIYFAVLIDDIIGQVFSLLILTVAAAESAIGLAIMIVFFKLYGDISIYKINLLSL.

3 helical membrane-spanning segments follow: residues 3–23, 28–48, and 64–84; these read ILNHFIFTFFLFCLGLFGIIL, IIIILMSIELLLLSINLNFIY, and LILTVAAAESAIGLAIMIVFF.

It belongs to the complex I subunit 4L family.

The protein localises to the mitochondrion membrane. It carries out the reaction a ubiquinone + NADH + 5 H(+)(in) = a ubiquinol + NAD(+) + 4 H(+)(out). Core subunit of the mitochondrial membrane respiratory chain NADH dehydrogenase (Complex I) that is believed to belong to the minimal assembly required for catalysis. Complex I functions in the transfer of electrons from NADH to the respiratory chain. The immediate electron acceptor for the enzyme is believed to be ubiquinone. This is NADH-ubiquinone oxidoreductase chain 4L (ND4L) from Phytophthora infestans (Potato late blight agent).